A 127-amino-acid chain; its full sequence is UPF0325 protein VV1_1856 (127 aa).

The protein belongs to the UPF0325 family.

The polypeptide is UPF0325 protein VV1_1856 (Vibrio vulnificus (strain CMCP6)).